The following is a 1009-amino-acid chain: Rho GTPase-activating protein gacT (1009 aa).

Disordered regions lie at residues 1 to 72 and 89 to 117; these read MKNI…SRNH and TSHH…QQTQ. Basic and acidic residues predominate over residues 12–23; it reads FHKDKKEGDKQD. Residues 26–35 are compositionally biased toward low complexity; the sequence is GSSGSSGNSG. The span at 58-69 shows a compositional bias: polar residues; sequence ESYSGDNSPTLS. A compositionally biased stretch (basic residues) spans 89 to 103; it reads TSHHSHSHNHNHNHN. Over residues 104-117 the composition is skewed to low complexity; sequence HQLTQPIQQQQQTQ. The region spanning 163-351 is the Rho-GAP domain; sequence VPLTQVPCRA…EVFPQHHLYY (189 aa). 3 disordered regions span residues 388 to 420, 432 to 482, and 508 to 571; these read TISG…DSTA, PEQQ…TFRV, and GPSG…TTDQ. 3 stretches are compositionally biased toward low complexity: residues 394–415, 432–468, and 512–521; these read PSNG…ITSP, PEQQ…QPIS, and TTGTTPNGGS. Residues 522–546 are compositionally biased toward gly residues; sequence LSIGGGNGGNGGSSLSVGSGGGNGG. The segment covering 547 to 557 has biased composition (low complexity); that stretch reads SSLSVGSNTSV. Positions 580-656 form a coiled coil; sequence AYTNNEDTKA…IEREIEKKRL (77 aa). The segment at 686–713 is disordered; the sequence is ISTIDGSGGSNRNSKNYGNGSSSSSNRR. Residues 695–713 show a composition bias toward low complexity; the sequence is SNRNSKNYGNGSSSSSNRR. The stretch at 715–743 forms a coiled coil; it reads SNTINQQLQMQLQQLQIQQQQYQQTQQSQ. The segment at 759–781 is disordered; sequence TTTTTTTSSGSNRFSSNRYKPVD. Residues 766 to 781 show a composition bias toward polar residues; it reads SSGSNRFSSNRYKPVD. Residues 839-952 adopt a coiled-coil conformation; the sequence is ENLVLLQQQY…IEEIHLLETY (114 aa). The segment at 965–1009 is disordered; the sequence is STTKDLLTRSRSPTLPSSINMSTSSLGSSSSSAYNNNNNNNNVPK. The segment covering 967–980 has biased composition (polar residues); that stretch reads TKDLLTRSRSPTLP. Positions 981–1009 are enriched in low complexity; it reads SSINMSTSSLGSSSSSAYNNNNNNNNVPK.

It localises to the cytoplasm. In terms of biological role, rho GTPase-activating protein involved in the signal transduction pathway. The chain is Rho GTPase-activating protein gacT (gacT) from Dictyostelium discoideum (Social amoeba).